We begin with the raw amino-acid sequence, 413 residues long: Probable elongation factor 1-gamma 2 (413 aa).

The GST N-terminal domain occupies 1–82 (MALVMHTYKG…YVSRKNGDNS (82 aa)). Positions 87 to 215 (SLIEYAHIEQ…AKQTEAVPPV (129 aa)) constitute a GST C-terminal domain. Residues 207–260 (KQTEAVPPVPTKKAPQPAKPKEEPKKAAPVAEAPKPAEEEEAPKPKAKNPLDLL) form a disordered region. The EF-1-gamma C-terminal domain maps to 253–413 (AKNPLDLLPP…EALLDAKCFK (161 aa)).

EF-1 is composed of four subunits: alpha, beta, delta, and gamma.

Functionally, probably plays a role in anchoring the complex to other cellular components. The sequence is that of Probable elongation factor 1-gamma 2 from Arabidopsis thaliana (Mouse-ear cress).